A 187-amino-acid polypeptide reads, in one-letter code: Elongation factor P (187 aa).

The protein belongs to the elongation factor P family.

The protein resides in the cytoplasm. The protein operates within protein biosynthesis; polypeptide chain elongation. Functionally, involved in peptide bond synthesis. Stimulates efficient translation and peptide-bond synthesis on native or reconstituted 70S ribosomes in vitro. Probably functions indirectly by altering the affinity of the ribosome for aminoacyl-tRNA, thus increasing their reactivity as acceptors for peptidyl transferase. This chain is Elongation factor P, found in Corynebacterium jeikeium (strain K411).